Consider the following 692-residue polypeptide: Elongation factor G (692 aa).

The tr-type G domain maps to 8 to 282; that stretch reads ENTRNIGIMA…GVVDYLPSPV (275 aa). Residues 17 to 24, 81 to 85, and 135 to 138 each bind GTP; these read AHIDAGKT, DTPGH, and NKMD.

This sequence belongs to the TRAFAC class translation factor GTPase superfamily. Classic translation factor GTPase family. EF-G/EF-2 subfamily.

It is found in the cytoplasm. Functionally, catalyzes the GTP-dependent ribosomal translocation step during translation elongation. During this step, the ribosome changes from the pre-translocational (PRE) to the post-translocational (POST) state as the newly formed A-site-bound peptidyl-tRNA and P-site-bound deacylated tRNA move to the P and E sites, respectively. Catalyzes the coordinated movement of the two tRNA molecules, the mRNA and conformational changes in the ribosome. This Anoxybacillus flavithermus (strain DSM 21510 / WK1) protein is Elongation factor G.